The chain runs to 180 residues: Peroxisome assembly protein 22 (180 aa).

Residues 15-32 (LGIVGTAIAVLVTSYYIY) form a helical membrane-spanning segment.

This sequence belongs to the peroxin-22 family.

It is found in the peroxisome membrane. Functionally, involved in peroxisome biogenesis. The polypeptide is Peroxisome assembly protein 22 (PEX22) (Saccharomyces cerevisiae (strain ATCC 204508 / S288c) (Baker's yeast)).